A 201-amino-acid chain; its full sequence is Cardiotrophin-1 (201 aa).

Belongs to the IL-6 superfamily. As to expression, highly expressed in heart, skeletal muscle, prostate and ovary. Lower levels in lung, kidney, pancreas, thymus, testis and small intestine. Little or no expression in brain, placenta, liver, spleen, colon or peripheral blood leukocytes.

The protein localises to the secreted. Functionally, induces cardiac myocyte hypertrophy in vitro. Binds to and activates the ILST/gp130 receptor. The sequence is that of Cardiotrophin-1 (CTF1) from Homo sapiens (Human).